The chain runs to 104 residues: Large ribosomal subunit protein uL24 (104 aa).

Belongs to the universal ribosomal protein uL24 family. As to quaternary structure, part of the 50S ribosomal subunit.

In terms of biological role, one of two assembly initiator proteins, it binds directly to the 5'-end of the 23S rRNA, where it nucleates assembly of the 50S subunit. One of the proteins that surrounds the polypeptide exit tunnel on the outside of the subunit. The chain is Large ribosomal subunit protein uL24 from Flavobacterium johnsoniae (strain ATCC 17061 / DSM 2064 / JCM 8514 / BCRC 14874 / CCUG 350202 / NBRC 14942 / NCIMB 11054 / UW101) (Cytophaga johnsonae).